Here is a 1120-residue protein sequence, read N- to C-terminus: Probable leucine-rich repeat receptor-like protein kinase At1g35710 (1120 aa).

Residues 1-29 (MGFAEKNLYDFRFLLFISIILSCSISASA) form the signal peptide. At 30-783 (TIAEANALLK…RELKKPKKNG (754 aa)) the chain is on the extracellular side. Asparagine 46, asparagine 60, asparagine 83, and asparagine 124 each carry an N-linked (GlcNAc...) asparagine glycan. LRR repeat units lie at residues 78-100 (SIEE…PFIS), 103-125 (NLAY…FGNL), 127-150 (KLIY…GNLK), 151-172 (NLTV…ELGN), 175-198 (SMTD…GNLK), 199-221 (NLMV…LGNM), 223-246 (SMTD…GNLK), 247-269 (NLMV…IGNM), 271-294 (SMTN…GNLK), 295-317 (NLTL…LGNI), 319-342 (SMID…GNLK), 343-365 (NLTI…LGNM), 367-389 (SMID…FGNL), 391-412 (NLTY…ELGN), 415-437 (SMIN…FGNF), 439-461 (KLES…VANS), 463-484 (HLTT…TVCK), 487-510 (KLQN…RDCK), 535-557 (DLNF…WEKS), 559-581 (KLGA…IWNM), 583-605 (QLVE…IGNL), 607-630 (NLSR…SFLT), 631-652 (NLES…TFDS), 655-677 (KLHD…SKLT), 678-701 (QLTQ…SSLQ), 702-723 (SLDK…TFEG), and 726-748 (ALTN…PTFR). A glycan (N-linked (GlcNAc...) asparagine) is linked at asparagine 151. N-linked (GlcNAc...) asparagine glycosylation is present at asparagine 295. N-linked (GlcNAc...) asparagine glycosylation is present at asparagine 343. Asparagine 391, asparagine 436, asparagine 460, asparagine 473, and asparagine 490 each carry an N-linked (GlcNAc...) asparagine glycan. Residues asparagine 569, asparagine 580, asparagine 604, asparagine 607, asparagine 641, and asparagine 660 are each glycosylated (N-linked (GlcNAc...) asparagine). Residue asparagine 712 is glycosylated (N-linked (GlcNAc...) asparagine). The chain crosses the membrane as a helical span at residues 784–804 (NLVVWILVPILGVLVILSICA). Topologically, residues 805–1120 (NTFTYCIRKR…TMLSISTTFS (316 aa)) are cytoplasmic. A Phosphothreonine modification is found at threonine 848. The Protein kinase domain occupies 851 to 1120 (FDPTHLIGTG…TMLSISTTFS (270 aa)). ATP-binding positions include 857 to 865 (IGTGGYSKV) and lysine 878. A phosphotyrosine mark is found at tyrosine 929 and tyrosine 968. Aspartate 981 acts as the Proton acceptor in catalysis. Serine 1014 carries the post-translational modification Phosphoserine. A phosphotyrosine mark is found at tyrosine 1022 and tyrosine 1029. Threonine 1030 bears the Phosphothreonine mark.

This sequence belongs to the protein kinase superfamily. Ser/Thr protein kinase family.

It localises to the membrane. It catalyses the reaction L-seryl-[protein] + ATP = O-phospho-L-seryl-[protein] + ADP + H(+). The enzyme catalyses L-threonyl-[protein] + ATP = O-phospho-L-threonyl-[protein] + ADP + H(+). In Arabidopsis thaliana (Mouse-ear cress), this protein is Probable leucine-rich repeat receptor-like protein kinase At1g35710.